We begin with the raw amino-acid sequence, 221 residues long: Phosphoglycolate phosphatase (221 aa).

D10 serves as the catalytic Nucleophile. Mg(2+) contacts are provided by D10, D12, and D168.

It belongs to the HAD-like hydrolase superfamily. CbbY/CbbZ/Gph/YieH family. The cofactor is Mg(2+).

It catalyses the reaction 2-phosphoglycolate + H2O = glycolate + phosphate. Its pathway is organic acid metabolism; glycolate biosynthesis; glycolate from 2-phosphoglycolate: step 1/1. Its function is as follows. Specifically catalyzes the dephosphorylation of 2-phosphoglycolate. Is involved in the dissimilation of the intracellular 2-phosphoglycolate formed during the DNA repair of 3'-phosphoglycolate ends, a major class of DNA lesions induced by oxidative stress. The protein is Phosphoglycolate phosphatase of Xanthomonas campestris pv. campestris (strain 8004).